Reading from the N-terminus, the 141-residue chain is Acetyltransferase YpeA (141 aa).

An N-acetyltransferase domain is found at 1-141 (MEIRVFRQED…GKRLIEDEEY (141 aa)).

It belongs to the acetyltransferase family. YpeA subfamily.

The polypeptide is Acetyltransferase YpeA (Escherichia coli O157:H7).